The following is a 517-amino-acid chain: Ascochitine biosynthesis cluster MFS transporter (517 aa).

The span at 1 to 12 (MSPDSRDPEAQR) shows a compositional bias: basic and acidic residues. Residues 1–45 (MSPDSRDPEAQRDVGLTKNTSSVNIPLESVKTDKTSNASPIMGPG) are disordered. N-linked (GlcNAc...) asparagine glycosylation is present at Asn-19. A run of 12 helical transmembrane segments spans residues 75-95 (WVITWLLSFLNVWVTFSSTIF), 111-131 (VVMTLGVSLTVLGFAVGPLIW), 141-161 (LTPFYFGYAVFCIFQIPVGVA), 172-192 (FFIGFFGTSAMAVTPGVLADI), 204-224 (VYAAAAFIGPIFGPIVGGFVV), 232-252 (WTAWITLILASAFGLAALVFV), 308-328 (ILLLVTLYISLVYGVLYLFFV), 347-367 (ALPLLAVMLGTLAGCLTILFV), 390-410 (LMMVGSVSLPIGLFWFGWTSS), 421-441 (AGFPIGIGLALIWVQGLSFLI), 457-475 (LIRSAVGAAFPLFGAPMYH), and 485-505 (LLGFLSVAMIPIPVAFYYYGP).

It belongs to the major facilitator superfamily. CAR1 family.

It localises to the membrane. Its function is as follows. MFS transporter; part of the gene cluster that mediates the biosynthesis the mycotoxin ascochitine, an o-quinone methide that plays a possible protective role against other microbial competitors in nature and is considered to be important for pathogenicity of legume-associated Didymella species. The protein is Ascochitine biosynthesis cluster MFS transporter of Didymella fabae (Leaf and pod spot disease fungus).